A 546-amino-acid polypeptide reads, in one-letter code: 2-isopropylmalate synthase (546 aa).

The Pyruvate carboxyltransferase domain occupies isoleucine 8–serine 271. Positions 17, 208, 210, and 244 each coordinate Mn(2+). Residues glutamine 408 to asparagine 546 form a regulatory domain region.

The protein belongs to the alpha-IPM synthase/homocitrate synthase family. LeuA type 1 subfamily. Homodimer. The cofactor is Mn(2+).

It localises to the cytoplasm. It catalyses the reaction 3-methyl-2-oxobutanoate + acetyl-CoA + H2O = (2S)-2-isopropylmalate + CoA + H(+). It functions in the pathway amino-acid biosynthesis; L-leucine biosynthesis; L-leucine from 3-methyl-2-oxobutanoate: step 1/4. Its function is as follows. Catalyzes the condensation of the acetyl group of acetyl-CoA with 3-methyl-2-oxobutanoate (2-ketoisovalerate) to form 3-carboxy-3-hydroxy-4-methylpentanoate (2-isopropylmalate). This chain is 2-isopropylmalate synthase, found in Prochlorococcus marinus (strain MIT 9312).